The primary structure comprises 62 residues: [Ser6, Val10, Asp11]-phyllokinin (62 aa).

The first 22 residues, 1-22 (MSFLKKSLLLVLFLGLVSFSIC), serve as a signal peptide directing secretion. Residues 23–51 (EEEKRETEEEENEDDMDEESEEKKRESPD) constitute a propeptide that is removed on maturation. The disordered stretch occupies residues 24-62 (EEKRETEEEENEDDMDEESEEKKRESPDRPPGFSPFRVD). A compositionally biased stretch (acidic residues) spans 30-42 (EEEENEDDMDEES).

The protein belongs to the frog skin active peptide (FSAP) family. Bradykinin-related peptide subfamily. As to expression, expressed by the skin glands.

It is found in the secreted. Its function is as follows. Induces relaxation of rat smooth muscle from tail artery and contraction of that from ileum, urinary bladder and uterus. Binds to both bradykinin receptor B1 (BDKRB1) and B2 (BDKRB2). The chain is [Ser6, Val10, Asp11]-phyllokinin from Agalychnis spurrelli (Gliding leaf frog).